Reading from the N-terminus, the 1787-residue chain is MASRRMSMYSVTSEGMGGPRGAGQQSTSVSTTTLLNAIHNIYLASQPYRLDAGTSLVVNTWLTATQAGPDGEVGGTVDPALAARAWEHARRRAEDGCIILGSLHQSTPSVMKPFLRSFPVSLPSSVFKALEALDPFIHCVAPFNPSAPRHAALGVTLTMNLAGNVTAASIALSQAGIDTAAGLLSIPAEAGYRAFDVFYHLLSSASTPAEREFLGLKSASSYALLARSGTYDPPSYLPTADDGASADDLRAALKEIGIKGSSHRDFISTLAALLKLGDTLDYTVDEEVLEEVCEDVGGLLGVDPEVLAKQCTTEDRQTLVGGLYEALVDWVISKANQAIQAQLARIRDGDESSDGGRGARTPNSAEDNGDTVCLTILEVPDLALAKALAMRGIFDDSQGINSEMKQDGVEVASAGQSVLRETQNAVVEAGPLLGDMSGPKGRDRQHHLEKREEVLEKVGIVADDDCFFKKLLFPVSGQGIQLGQAGRLDIQGVLGSSRAWYHLSIHPTDDSPASLAALPSINSAWSAGTVSRQLRAWRLPEWANRRNKNLDFTADFDVEEFVQRYSILGCREGRDGIETWILERGWSNGEVVVGHERVWMRESAWWEAENMLDMKPMGDMPMGASNLMAPPGVMAMDTGYSHNGSGYFPPINDAASNGSRDQLLHQRNQSQATLAMGMGHSPGVAPSVAPSGLRNVSKGDYGLGGKGDNHRDEILFNNEGEFVGALDPELANNKKIEEQQTSKSRRMWVALVWAITFWIPSPLLRYVGRMKRPDVRMAWREKFVLCFIIFLLNAAIVFWIIFLGRLLCPNFDKVWTRDEVKQHQGDTDFWVSNRGKVYDISKFWKIPHGDVGNEATQDLMQPFAGLSMDAYIPPPLFKACPGLGIGDRLALVPNATETENSAGMHISGPGQANPTSGLADANWYPDVFLPRMKEYYKGELVWDASKINSEGQNQDHKWVIYDNKVYDLRDYFSTLKTMNNLAQYKFLDDSLTQVVERNPGTDVTGTWNGLLSNAQRNNLTTYTTLRNNMNCMDNYFYVGTVDFRYTARCQTNNYFLLAFAIIMCAVILLKFVSALQFGSKRRPSPQDKFVICQVPAYTEGEDSLRKALDSLTALQYDNKRKLICVICDGVLTGEGNDRPTPKIVLDILGVDPKVDPPALPFKSVGASSEQLNYGKVYSGLYEFEGNVVPYVVVVKVGKESEQSKAKPGNRGKRDSQILLMSFLNRVHHRAPMNPLELEMFHQINNIIGVDPELYEYLLMIDADTCVREDALTRLVASCASDAKIAGICGETSLQNEERSWWTMIQVYEYFISHHLAKAFESLFGSVTCLPGCFTMYRLRTADKGKPLIISDNVIRDYSDCYVDTLHKKNLLSLGEDRYLTTLMTKHFPYMSFKFNPNAFCQTAAPEKWSVLLSQRRRWINSTIHNLVELMTLKEMCGFCCFSMRFVVFVDLFGTIILPATCVYLGYLIYTVASGTGPFPLITLIMLAAVYGLQALIFILKRQWQHIGWMIIYLLAFPIYSFILPIYSFWNQDNFSWGNTRIVVGESGKKTIVAVDDEGFDPRSIPLQRWDDYALANNLPGRRGGAGPTEKMDHVFADAYEMDDMRSVYSAARPGSVLTGMNRNTAYMSPNSPAPYQHMSRSPTAYAGPTPYSDNPAARQSMVSMSPYQDTNHGRMMSMSNLRNVANASPVPTRAGTAMGFAGGSRAPLGQSEAARQSTMSFDFQRNAAGPDDFQIVDAIRAVLMEVDLDTVTKKQVRALVEQRLQTELVGERRTFLDRQIDNELANM.

The interval 1-26 (MASRRMSMYSVTSEGMGGPRGAGQQS) is disordered. N164 carries N-linked (GlcNAc...) asparagine glycosylation. The disordered stretch occupies residues 345–367 (RIRDGDESSDGGRGARTPNSAED). N643, N657, N668, and N695 each carry an N-linked (GlcNAc...) asparagine glycan. 2 helical membrane-spanning segments follow: residues 747-767 (MWVA…LRYV) and 783-803 (FVLC…IIFL). Residues N894 and N1018 are each glycosylated (N-linked (GlcNAc...) asparagine). The chain crosses the membrane as a helical span at residues 1055 to 1075 (FLLAFAIIMCAVILLKFVSAL). N1420 carries N-linked (GlcNAc...) asparagine glycosylation. 3 consecutive transmembrane segments (helical) span residues 1445–1465 (FVVF…VYLG), 1478–1498 (FPLI…LIFI), and 1506–1526 (IGWM…LPIY). Residue N1533 is glycosylated (N-linked (GlcNAc...) asparagine). The tract at residues 1628-1657 (SPNSPAPYQHMSRSPTAYAGPTPYSDNPAA) is disordered. Residues 1729–1785 (GPDDFQIVDAIRAVLMEVDLDTVTKKQVRALVEQRLQTELVGERRTFLDRQIDNELA) enclose the DEK-C domain.

Belongs to the chitin synthase family. Class V subfamily.

Its subcellular location is the cell membrane. The enzyme catalyses [(1-&gt;4)-N-acetyl-beta-D-glucosaminyl](n) + UDP-N-acetyl-alpha-D-glucosamine = [(1-&gt;4)-N-acetyl-beta-D-glucosaminyl](n+1) + UDP + H(+). Its function is as follows. Polymerizes chitin, a structural polymer of the cell wall and septum, by transferring the sugar moiety of UDP-GlcNAc to the non-reducing end of the growing chitin polymer. May play a minor overlapping role with CHS6 in growth and differentiation. The polypeptide is Chitin synthase 5 (Pyricularia oryzae (strain 70-15 / ATCC MYA-4617 / FGSC 8958) (Rice blast fungus)).